The following is a 244-amino-acid chain: UDP-2,3-diacylglucosamine hydrolase (244 aa).

5 residues coordinate Mn(2+): Asp8, His10, Asp41, Asn79, and His114. 79 to 80 provides a ligand contact to substrate; it reads NR. The substrate site is built by Asp122, Ser160, Asn164, Lys167, and His195. His195 and His197 together coordinate Mn(2+).

Belongs to the LpxH family. Requires Mn(2+) as cofactor.

It localises to the cell inner membrane. The enzyme catalyses UDP-2-N,3-O-bis[(3R)-3-hydroxytetradecanoyl]-alpha-D-glucosamine + H2O = 2-N,3-O-bis[(3R)-3-hydroxytetradecanoyl]-alpha-D-glucosaminyl 1-phosphate + UMP + 2 H(+). The protein operates within glycolipid biosynthesis; lipid IV(A) biosynthesis; lipid IV(A) from (3R)-3-hydroxytetradecanoyl-[acyl-carrier-protein] and UDP-N-acetyl-alpha-D-glucosamine: step 4/6. In terms of biological role, hydrolyzes the pyrophosphate bond of UDP-2,3-diacylglucosamine to yield 2,3-diacylglucosamine 1-phosphate (lipid X) and UMP by catalyzing the attack of water at the alpha-P atom. Involved in the biosynthesis of lipid A, a phosphorylated glycolipid that anchors the lipopolysaccharide to the outer membrane of the cell. This Hahella chejuensis (strain KCTC 2396) protein is UDP-2,3-diacylglucosamine hydrolase.